The chain runs to 522 residues: Cytochrome P450 4F4 (522 aa).

Helical transmembrane passes span 15-35 (TSLPWLLLLLIGASWLLVRVL) and 87-107 (GFMTWLGPILPIITLCHPDVI). Heme-binding residues include glutamate 328 and cysteine 468.

It belongs to the cytochrome P450 family. Heme serves as cofactor. Expressed in hepatocytes. High expression in liver and kidney. Lower expression in brain.

Its subcellular location is the endoplasmic reticulum membrane. It localises to the microsome membrane. It catalyses the reaction (5Z,8Z,11Z,14Z)-eicosatetraenoate + reduced [NADPH--hemoprotein reductase] + O2 = 20-hydroxy-(5Z,8Z,11Z,14Z)-eicosatetraenoate + oxidized [NADPH--hemoprotein reductase] + H2O + H(+). The enzyme catalyses leukotriene B4 + reduced [NADPH--hemoprotein reductase] + O2 = 20-hydroxy-leukotriene B4 + oxidized [NADPH--hemoprotein reductase] + H2O + H(+). The catalysed reaction is 6-trans-leukotriene B4 + reduced [NADPH--hemoprotein reductase] + O2 = 20-hydroxy-6-trans-leukotriene B4 + oxidized [NADPH--hemoprotein reductase] + H2O + H(+). It carries out the reaction prostaglandin A1 + reduced [NADPH--hemoprotein reductase] + O2 = 20-hydroxy prostaglandin A1 + oxidized [NADPH--hemoprotein reductase] + H2O + H(+). It catalyses the reaction prostaglandin E1 + reduced [NADPH--hemoprotein reductase] + O2 = 20-hydroxy prostaglandin E1 + oxidized [NADPH--hemoprotein reductase] + H2O + H(+). Its function is as follows. A cytochrome P450 monooxygenase involved in the metabolism of arachidonic acid and its oxygenated derivatives. Mechanistically, uses molecular oxygen inserting one oxygen atom into a substrate, and reducing the second into a water molecule, with two electrons provided by NADPH via cytochrome P450 reductase (CPR; NADPH-ferrihemoprotein reductase). Participates in the conversion of arachidonic acid to omega-hydroxyeicosatetraenoic acid (20-HETE), a signaling molecule acting both as vasoconstrictive and natriuretic with overall effect on arterial blood pressure. Hydroxylates the terminal carbon (omega-hydroxylation) of inflammatory lipid mediators, including prostaglandin (PG) A1, PGE1 and leukotriene B4 (LTB4), and may play a role in inactivation of these oxylipins during the resolution of inflammation. In Rattus norvegicus (Rat), this protein is Cytochrome P450 4F4.